We begin with the raw amino-acid sequence, 98 residues long: uncharacterized protein (98 aa).

This is an uncharacterized protein from Invertebrate iridescent virus 6 (IIV-6).